We begin with the raw amino-acid sequence, 806 residues long: Leucine--tRNA ligase (806 aa).

Residues 40–51 carry the 'HIGH' region motif; that stretch reads PYPSGAGLHVGH. The 'KMSKS' region motif lies at 576-580; the sequence is KMSKS. Residue lysine 579 coordinates ATP.

The protein belongs to the class-I aminoacyl-tRNA synthetase family.

It is found in the cytoplasm. The catalysed reaction is tRNA(Leu) + L-leucine + ATP = L-leucyl-tRNA(Leu) + AMP + diphosphate. This chain is Leucine--tRNA ligase, found in Halalkalibacterium halodurans (strain ATCC BAA-125 / DSM 18197 / FERM 7344 / JCM 9153 / C-125) (Bacillus halodurans).